A 638-amino-acid polypeptide reads, in one-letter code: Ubiquitin-like-specific protease 2 (638 aa).

Over residues 1-12 (MRDSKDALDDKS) the composition is skewed to basic and acidic residues. 2 disordered regions span residues 1–79 (MRDS…PKHL) and 238–314 (PQKT…TSND). The segment covering 238–249 (PQKTVRSIVKQT) has biased composition (polar residues). Residues 250–264 (SSPHSSKMPKHSLPS) are compositionally biased toward low complexity. Residues 267–314 (TPFNSNSGDSLLSRIKNSNQSSSERPTANNGAQEQNQSSSSAGNTSND) are compositionally biased toward polar residues. Active-site residues include His440 and Asp494. At Thr526 the chain carries Phosphothreonine. Cys544 is an active-site residue. The segment covering 610–619 (NERQSLSSGS) has biased composition (polar residues). The segment at 610-638 (NERQSLSSGSNDEEDKENDDDLAILPITN) is disordered. A compositionally biased stretch (acidic residues) spans 620 to 631 (NDEEDKENDDDL).

It belongs to the peptidase C48 family.

It is found in the nucleus. The sequence is that of Ubiquitin-like-specific protease 2 (ulp2) from Schizosaccharomyces pombe (strain 972 / ATCC 24843) (Fission yeast).